Reading from the N-terminus, the 79-residue chain is Small ribosomal subunit protein bS18 (79 aa).

This sequence belongs to the bacterial ribosomal protein bS18 family. Part of the 30S ribosomal subunit. Forms a tight heterodimer with protein bS6.

Functionally, binds as a heterodimer with protein bS6 to the central domain of the 16S rRNA, where it helps stabilize the platform of the 30S subunit. In Streptococcus pyogenes serotype M5 (strain Manfredo), this protein is Small ribosomal subunit protein bS18.